Here is a 424-residue protein sequence, read N- to C-terminus: Tyrosine--tRNA ligase (424 aa).

Tyr-37 is a binding site for L-tyrosine. A 'HIGH' region motif is present at residues 42–51 (PTADSLHLGH). Positions 175 and 179 each coordinate L-tyrosine. The 'KMSKS' region motif lies at 235–239 (KFGKT). ATP is bound at residue Lys-238. The S4 RNA-binding domain maps to 357–414 (ADLMQALVDAELQPSRGQARKTIASNAVTINGEKQSDPEYIFNDEDRLFGRYTLLRRG).

This sequence belongs to the class-I aminoacyl-tRNA synthetase family. TyrS type 1 subfamily. As to quaternary structure, homodimer.

It localises to the cytoplasm. The catalysed reaction is tRNA(Tyr) + L-tyrosine + ATP = L-tyrosyl-tRNA(Tyr) + AMP + diphosphate + H(+). Catalyzes the attachment of tyrosine to tRNA(Tyr) in a two-step reaction: tyrosine is first activated by ATP to form Tyr-AMP and then transferred to the acceptor end of tRNA(Tyr). This is Tyrosine--tRNA ligase from Salmonella enteritidis PT4 (strain P125109).